Here is a 379-residue protein sequence, read N- to C-terminus: MVLQSTRWLALGYFTYFFSYGIFLPFWSVWLKGIGLTPETIGLLLGAGLVARFLGSLLIAPRVSDPSRLISALRVLALLTLLFAVAFWAGAHVAWLMLVMIGFNLFFSPLVPLTDALANTWQKQFPLDYGKVRLWGSVAFVIGSALTGKLVTMFDYRVILALLTLGVASMLLGFLIRPTIQPQGASRQQESTGWSAWLALVRQNWRFLACVCLLQGAHAAYYGFSAIYWQAAGYSASAVGYLWSLGVVAEVIIFALSNKLFRRCSARDMLLISAICGVVRWGIMGATTALPWLIVVQILHCGTFTVCHLAAMRYIAARQGSEVIRLQAVYSAVAMGGSIAIMTVFAGFLYQYLGHGVFWVMALVALPAMFLRPKVVPSC.

The Cytoplasmic portion of the chain corresponds to 1–4 (MVLQ). A helical transmembrane segment spans residues 5–31 (STRWLALGYFTYFFSYGIFLPFWSVWL). Over 32–37 (KGIGLT) the chain is Periplasmic. Residues 38–66 (PETIGLLLGAGLVARFLGSLLIAPRVSDP) form a helical membrane-spanning segment. Over 67–70 (SRLI) the chain is Cytoplasmic. Residues 71-96 (SALRVLALLTLLFAVAFWAGAHVAWL) traverse the membrane as a helical segment. Topologically, residues 97 to 100 (MLVM) are periplasmic. The helical transmembrane segment at 101–118 (IGFNLFFSPLVPLTDALA) threads the bilayer. Topologically, residues 119–129 (NTWQKQFPLDY) are cytoplasmic. A helical membrane pass occupies residues 130 to 152 (GKVRLWGSVAFVIGSALTGKLVT). Over 153–155 (MFD) the chain is Periplasmic. Residues 156–175 (YRVILALLTLGVASMLLGFL) traverse the membrane as a helical segment. The Cytoplasmic portion of the chain corresponds to 176–207 (IRPTIQPQGASRQQESTGWSAWLALVRQNWRF). A helical membrane pass occupies residues 208–227 (LACVCLLQGAHAAYYGFSAI). Over 228–231 (YWQA) the chain is Periplasmic. The chain crosses the membrane as a helical span at residues 232-256 (AGYSASAVGYLWSLGVVAEVIIFAL). Residues 257-266 (SNKLFRRCSA) are Cytoplasmic-facing. Residues 267-286 (RDMLLISAICGVVRWGIMGA) form a helical membrane-spanning segment. Residues 287–289 (TTA) lie on the Periplasmic side of the membrane. Residues 290–312 (LPWLIVVQILHCGTFTVCHLAAM) form a helical membrane-spanning segment. Residues 313 to 323 (RYIAARQGSEV) lie on the Cytoplasmic side of the membrane. The chain crosses the membrane as a helical span at residues 324–351 (IRLQAVYSAVAMGGSIAIMTVFAGFLYQ). Residues 352–354 (YLG) are Periplasmic-facing. A helical membrane pass occupies residues 355–375 (HGVFWVMALVALPAMFLRPKV). The Cytoplasmic segment spans residues 376–379 (VPSC).

Belongs to the major facilitator superfamily. Phenyl propionate permease (PPP) (TC 2.A.1.27) family.

Its subcellular location is the cell inner membrane. Functionally, probable permease involved in the uptake of 3-phenylpropionic acid. The chain is Probable 3-phenylpropionic acid transporter (hcaT) from Escherichia coli (strain K12).